The sequence spans 514 residues: 2-isopropylmalate synthase (514 aa).

Positions 5–267 constitute a Pyruvate carboxyltransferase domain; the sequence is IYIFDTTLRD…HTDIVTEEIT (263 aa). Aspartate 14, histidine 202, histidine 204, and asparagine 238 together coordinate Mn(2+). Residues 392–514 are regulatory domain; the sequence is KLKYYQVFTG…SKDLQKISAN (123 aa).

The protein belongs to the alpha-IPM synthase/homocitrate synthase family. LeuA type 1 subfamily. In terms of assembly, homodimer. The cofactor is Mn(2+).

Its subcellular location is the cytoplasm. It carries out the reaction 3-methyl-2-oxobutanoate + acetyl-CoA + H2O = (2S)-2-isopropylmalate + CoA + H(+). The protein operates within amino-acid biosynthesis; L-leucine biosynthesis; L-leucine from 3-methyl-2-oxobutanoate: step 1/4. Functionally, catalyzes the condensation of the acetyl group of acetyl-CoA with 3-methyl-2-oxobutanoate (2-ketoisovalerate) to form 3-carboxy-3-hydroxy-4-methylpentanoate (2-isopropylmalate). The chain is 2-isopropylmalate synthase from Clostridium kluyveri (strain NBRC 12016).